The primary structure comprises 221 residues: Fructokinase (221 aa).

The protein belongs to the carbohydrate kinase PfkB family.

The catalysed reaction is D-fructose + ATP = D-fructose 6-phosphate + ADP + H(+). The sequence is that of Fructokinase (scrK) from Salmonella thompson.